A 348-amino-acid polypeptide reads, in one-letter code: VIP36-like protein (348 aa).

The first 38 residues, 1–38 (MAVALGPSGWWQRWRRRLSAREVSRMLLLLLLLGSGQG), serve as a signal peptide directing secretion. Residues 39–313 (PRQVGAGQTF…APLPPLSGLA (275 aa)) are Lumenal-facing. The L-type lectin-like domain maps to 49–274 (EYLKREHSLS…DVISLKLFEL (226 aa)). The a carbohydrate site is built by Ser93 and Asp128. Asp159, Tyr161, and Asn163 together coordinate Ca(2+). A carbohydrate contacts are provided by Tyr161 and Asn163. Asn181 is a glycosylation site (N-linked (GlcNAc...) asparagine). An a carbohydrate-binding site is contributed by His188. Ca(2+) is bound at residue Asp191. A disulfide bond links Cys200 and Cys237. Residue 258 to 260 (GDL) coordinates a carbohydrate. Residues 314 to 334 (LFLIVFFSLVFSVFAIVIGII) traverse the membrane as a helical segment. The Cytoplasmic segment spans residues 335-348 (LYNKWQDQSRKRFY). The Endoplasmic reticulum retention signal motif lies at 344-346 (RKR).

It localises to the endoplasmic reticulum membrane. The protein resides in the golgi apparatus membrane. In terms of biological role, may be involved in the regulation of export from the endoplasmic reticulum of a subset of glycoproteins. May function as a regulator of ERGIC-53. The sequence is that of VIP36-like protein (LMAN2L) from Bos taurus (Bovine).